The primary structure comprises 157 residues: 2-C-methyl-D-erythritol 2,4-cyclodiphosphate synthase (157 aa).

The a divalent metal cation site is built by Asp-8 and His-10. 4-CDP-2-C-methyl-D-erythritol 2-phosphate-binding positions include 8 to 10 and 34 to 35; these read DIH and HS. His-42 contributes to the a divalent metal cation binding site. Residues 56-58 and 132-135 contribute to the 4-CDP-2-C-methyl-D-erythritol 2-phosphate site; these read DIG and TTNE.

This sequence belongs to the IspF family. Homotrimer. The cofactor is a divalent metal cation.

The catalysed reaction is 4-CDP-2-C-methyl-D-erythritol 2-phosphate = 2-C-methyl-D-erythritol 2,4-cyclic diphosphate + CMP. Its pathway is isoprenoid biosynthesis; isopentenyl diphosphate biosynthesis via DXP pathway; isopentenyl diphosphate from 1-deoxy-D-xylulose 5-phosphate: step 4/6. Its function is as follows. Involved in the biosynthesis of isopentenyl diphosphate (IPP) and dimethylallyl diphosphate (DMAPP), two major building blocks of isoprenoid compounds. Catalyzes the conversion of 4-diphosphocytidyl-2-C-methyl-D-erythritol 2-phosphate (CDP-ME2P) to 2-C-methyl-D-erythritol 2,4-cyclodiphosphate (ME-CPP) with a corresponding release of cytidine 5-monophosphate (CMP). This Synechococcus sp. (strain JA-3-3Ab) (Cyanobacteria bacterium Yellowstone A-Prime) protein is 2-C-methyl-D-erythritol 2,4-cyclodiphosphate synthase.